We begin with the raw amino-acid sequence, 288 residues long: Probable endonuclease 4 (288 aa).

9 residues coordinate Zn(2+): His-75, His-115, Glu-153, Asp-187, His-190, His-224, Asp-237, His-239, and Glu-269.

The protein belongs to the AP endonuclease 2 family. Requires Zn(2+) as cofactor.

The catalysed reaction is Endonucleolytic cleavage to 5'-phosphooligonucleotide end-products.. Its function is as follows. Endonuclease IV plays a role in DNA repair. It cleaves phosphodiester bonds at apurinic or apyrimidinic (AP) sites, generating a 3'-hydroxyl group and a 5'-terminal sugar phosphate. The sequence is that of Probable endonuclease 4 from Chlamydia trachomatis serovar A (strain ATCC VR-571B / DSM 19440 / HAR-13).